A 129-amino-acid polypeptide reads, in one-letter code: Small ribosomal subunit protein uS11c (129 aa).

Belongs to the universal ribosomal protein uS11 family. In terms of assembly, part of the 30S ribosomal subunit.

Its subcellular location is the plastid. It localises to the chloroplast. This chain is Small ribosomal subunit protein uS11c, found in Rhodomonas salina (Cryptomonas salina).